We begin with the raw amino-acid sequence, 403 residues long: Glyceraldehyde-3-phosphate dehydrogenase A, chloroplastic (403 aa).

A chloroplast-targeting transit peptide spans 1 to 66 (MASSMLSATT…GGPRRAPTEA (66 aa)). Residues 77 to 78 (RI), Asp102, and Arg147 each bind NADP(+). Residues 219 to 221 (SCT), Thr250, Arg265, 278 to 279 (TG), and Arg301 each bind D-glyceraldehyde 3-phosphate. Cys220 functions as the Nucleophile in the catalytic mechanism. Asn383 contacts NADP(+).

Belongs to the glyceraldehyde-3-phosphate dehydrogenase family. As to quaternary structure, tetramer of either four A chains (GAPDH 2) or two A and two B chains (GAPDH 1).

The protein resides in the plastid. Its subcellular location is the chloroplast. The enzyme catalyses D-glyceraldehyde 3-phosphate + phosphate + NADP(+) = (2R)-3-phospho-glyceroyl phosphate + NADPH + H(+). It functions in the pathway carbohydrate biosynthesis; Calvin cycle. The sequence is that of Glyceraldehyde-3-phosphate dehydrogenase A, chloroplastic (GAPA) from Zea mays (Maize).